A 207-amino-acid chain; its full sequence is GTP cyclohydrolase-2 (207 aa).

49-53 contributes to the GTP binding site; the sequence is RTHSE. 3 residues coordinate Zn(2+): Cys54, Cys65, and Cys67. Residues Gln70, 92-94, and Thr114 each bind GTP; that span reads EGR. Residue Asp126 is the Proton acceptor of the active site. Catalysis depends on Arg128, which acts as the Nucleophile. Residues Thr149 and Lys154 each coordinate GTP.

It belongs to the GTP cyclohydrolase II family. It depends on Zn(2+) as a cofactor.

It carries out the reaction GTP + 4 H2O = 2,5-diamino-6-hydroxy-4-(5-phosphoribosylamino)-pyrimidine + formate + 2 phosphate + 3 H(+). The protein operates within cofactor biosynthesis; riboflavin biosynthesis; 5-amino-6-(D-ribitylamino)uracil from GTP: step 1/4. Catalyzes the conversion of GTP to 2,5-diamino-6-ribosylamino-4(3H)-pyrimidinone 5'-phosphate (DARP), formate and pyrophosphate. The polypeptide is GTP cyclohydrolase-2 (Hahella chejuensis (strain KCTC 2396)).